The sequence spans 219 residues: MKKFFIIGTNTEVGKTYISTKLIEVCEHQNIKSLCLKPVASGQSQFSELCEDVESILNAYKHKFTAAEINLISFNQAVAPHIIAAKTKVDISIENLKQFIEDKYNQDLDILFIEGAGGLLTPYSDHTTQLDLIKALQIPVLLVSAIKVGCINHTLLTINELNRHNIKLAGWIANCNDSNIKYIDEQINTIEELSGYKCSAKISRNADYLDFIDLSKILI.

Glu-12–Tyr-17 provides a ligand contact to ATP. Residue Thr-16 participates in Mg(2+) binding. Residue Lys-37 is part of the active site. Position 41 (Ser-41) interacts with substrate. Residues Asp-52, Glu-114 to Gly-117, and Asn-174 to Cys-175 each bind ATP. Mg(2+)-binding residues include Asp-52 and Glu-114.

The protein belongs to the dethiobiotin synthetase family. As to quaternary structure, homodimer. Mg(2+) serves as cofactor.

It is found in the cytoplasm. It carries out the reaction (7R,8S)-7,8-diammoniononanoate + CO2 + ATP = (4R,5S)-dethiobiotin + ADP + phosphate + 3 H(+). It functions in the pathway cofactor biosynthesis; biotin biosynthesis; biotin from 7,8-diaminononanoate: step 1/2. Functionally, catalyzes a mechanistically unusual reaction, the ATP-dependent insertion of CO2 between the N7 and N8 nitrogen atoms of 7,8-diaminopelargonic acid (DAPA, also called 7,8-diammoniononanoate) to form a ureido ring. This chain is ATP-dependent dethiobiotin synthetase BioD, found in Francisella tularensis subsp. holarctica (strain FTNF002-00 / FTA).